A 431-amino-acid chain; its full sequence is MAEIVDVRAREVLDSRGNPTVEADVVLKSGVVGSACAPSGASTGSREALELRDKDPARYMGKGVLKAVDAVNTSIRSALIGRDAREQRELDRIMIDLDGTENKANLGANAILAVSLAAAKAAAQEKGVPLYAHIADINGTSGQYSMPVPMMNILNGGEHADNNVDIQEFMVQPVGVASFREALRVGAEIFHNLKKVLHDKGLNTAVGDEGGFAPNLPSNEAALAAIEEAVTKAGYKLGSDVTLALDCASSEFYKDGQYNLSGEGKVFSSEEFADYLGDLSQRYPIVSIEDGMDESDWDGWAALTRKLGDKVQLVGDDLFVTNTKILKQGIDKGIANSILIKFNQIGSLSETLDAIKMAKDAGFTAVISHRSGETEDTTIADLAVATSAGQIKTGSLCRSDRVAKYNRLLRIEEELAGSAPYRGLKEIKGQE.

Residue Q167 participates in (2R)-2-phosphoglycerate binding. E209 functions as the Proton donor in the catalytic mechanism. Mg(2+) is bound by residues D246, E289, and D316. Positions 341, 370, 371, and 392 each coordinate (2R)-2-phosphoglycerate. K341 acts as the Proton acceptor in catalysis.

The protein belongs to the enolase family. Component of the RNA degradosome, a multiprotein complex involved in RNA processing and mRNA degradation. Requires Mg(2+) as cofactor.

The protein localises to the cytoplasm. Its subcellular location is the secreted. It is found in the cell surface. The catalysed reaction is (2R)-2-phosphoglycerate = phosphoenolpyruvate + H2O. It participates in carbohydrate degradation; glycolysis; pyruvate from D-glyceraldehyde 3-phosphate: step 4/5. In terms of biological role, catalyzes the reversible conversion of 2-phosphoglycerate (2-PG) into phosphoenolpyruvate (PEP). It is essential for the degradation of carbohydrates via glycolysis. This is Enolase from Hahella chejuensis (strain KCTC 2396).